The primary structure comprises 505 residues: Surface lipoprotein assembly modifier 2 (505 aa).

An N-terminal signal peptide occupies residues Met1–Ala19. The segment at Ala23 to Thr188 is N-terminal domain. Residues Gly189 to Phe505 are C-terminal probable beta barrel. 14 consecutive transmembrane segments (beta stranded) span residues Trp190–Val200, Leu232–Pro243, His248–Gly258, Phe273–Lys283, Gln287–Val297, Val326–Arg335, Trp340–Arg350, Gly368–Leu377, Ala381–Arg391, Asn411–Glu420, Leu427–Arg437, Trp456–Asp465, Ile472–Arg482, and Ser495–Phe505.

Belongs to the Slam family.

The protein localises to the cell outer membrane. Functionally, required for correct export to the cell surface of cell outer membrane lipoprotein HpuA heterologously in E.coli (hpuA does not exist in N.meningitidis strain MC58). This Neisseria meningitidis serogroup B (strain ATCC BAA-335 / MC58) protein is Surface lipoprotein assembly modifier 2.